A 307-amino-acid chain; its full sequence is UPF0276 protein Bphyt_5128 (307 aa).

Belongs to the UPF0276 family.

The protein is UPF0276 protein Bphyt_5128 of Paraburkholderia phytofirmans (strain DSM 17436 / LMG 22146 / PsJN) (Burkholderia phytofirmans).